Consider the following 642-residue polypeptide: Threonine--tRNA ligase (642 aa).

Residues 1–61 (MPIITLPDGS…EHDASLEIIT (61 aa)) enclose the TGS domain. A catalytic region spans residues 244–535 (DHRKIGKQLD…LIEEYAGFFP (292 aa)). 3 residues coordinate Zn(2+): Cys335, His386, and His512.

It belongs to the class-II aminoacyl-tRNA synthetase family. In terms of assembly, homodimer. Requires Zn(2+) as cofactor.

Its subcellular location is the cytoplasm. The catalysed reaction is tRNA(Thr) + L-threonine + ATP = L-threonyl-tRNA(Thr) + AMP + diphosphate + H(+). In terms of biological role, catalyzes the attachment of threonine to tRNA(Thr) in a two-step reaction: L-threonine is first activated by ATP to form Thr-AMP and then transferred to the acceptor end of tRNA(Thr). Also edits incorrectly charged L-seryl-tRNA(Thr). The sequence is that of Threonine--tRNA ligase from Vibrio cholerae serotype O1 (strain M66-2).